A 354-amino-acid chain; its full sequence is Protein-arginine kinase (354 aa).

Residues 24–254 form the Phosphagen kinase C-terminal domain; the sequence is IVLSSRIRLA…QQIIQQEKMA (231 aa). Residues 27-31, His92, Arg125, 176-180, and 207-212 contribute to the ATP site; these read SSRIR, RASVM, and RGIYGE. Residues 337 to 342 carry the RDXXRA motif of the pArg binding pocket involved in allosteric regulation motif; the sequence is RDYRRA.

The protein belongs to the ATP:guanido phosphotransferase family.

It catalyses the reaction L-arginyl-[protein] + ATP = N(omega)-phospho-L-arginyl-[protein] + ADP + H(+). Appears to be allosterically activated by the binding of pArg-containing polypeptides to the pArg-binding pocket localized in the C-terminal domain of McsB. In terms of biological role, catalyzes the specific phosphorylation of arginine residues in a large number of proteins. Is part of the bacterial stress response system. Protein arginine phosphorylation has a physiologically important role and is involved in the regulation of many critical cellular processes, such as protein homeostasis, motility, competence, and stringent and stress responses, by regulating gene expression and protein activity. The polypeptide is Protein-arginine kinase (Bacillus cereus (strain G9842)).